The primary structure comprises 337 residues: Viral cathepsin (337 aa).

An N-terminal signal peptide occupies residues 1 to 19 (MTLLMIFTILLVASSQIEG). The propeptide at 20–126 (HLKFDIHDAQ…DAPPDVHDEL (107 aa)) is activation peptide. Disulfide bonds link C147-C188, C181-C221, and C276-C324. C150 is a catalytic residue. N172 carries an N-linked (GlcNAc...) asparagine; by host glycan. Residues H283 and N303 contribute to the active site.

Belongs to the peptidase C1 family. Post-translationally, synthesized as an inactive proenzyme and activated by proteolytic removal of the inhibitory propeptide.

The enzyme catalyses Endopeptidase of broad specificity, hydrolyzing substrates of both cathepsin L and cathepsin B.. In terms of biological role, cysteine protease that plays an essential role in host liquefaction to facilitate horizontal transmission of the virus. May participate in the degradation of foreign protein expressed by the baculovirus system. The chain is Viral cathepsin (VCATH) from Adoxophyes honmai (Smaller tea tortrix moth).